Reading from the N-terminus, the 417-residue chain is Histidine--tRNA ligase (417 aa).

The protein belongs to the class-II aminoacyl-tRNA synthetase family. Homodimer.

The protein localises to the cytoplasm. It catalyses the reaction tRNA(His) + L-histidine + ATP = L-histidyl-tRNA(His) + AMP + diphosphate + H(+). The sequence is that of Histidine--tRNA ligase from Oleidesulfovibrio alaskensis (strain ATCC BAA-1058 / DSM 17464 / G20) (Desulfovibrio alaskensis).